A 167-amino-acid polypeptide reads, in one-letter code: Large ribosomal subunit protein uL10 (167 aa).

Belongs to the universal ribosomal protein uL10 family. As to quaternary structure, part of the ribosomal stalk of the 50S ribosomal subunit. The N-terminus interacts with L11 and the large rRNA to form the base of the stalk. The C-terminus forms an elongated spine to which L12 dimers bind in a sequential fashion forming a multimeric L10(L12)X complex.

Forms part of the ribosomal stalk, playing a central role in the interaction of the ribosome with GTP-bound translation factors. The chain is Large ribosomal subunit protein uL10 from Streptococcus mutans serotype c (strain ATCC 700610 / UA159).